A 101-amino-acid chain; its full sequence is Small ribosomal subunit protein uS14 (101 aa).

It belongs to the universal ribosomal protein uS14 family. As to quaternary structure, part of the 30S ribosomal subunit. Contacts proteins S3 and S10.

Functionally, binds 16S rRNA, required for the assembly of 30S particles and may also be responsible for determining the conformation of the 16S rRNA at the A site. The sequence is that of Small ribosomal subunit protein uS14 from Alcanivorax borkumensis (strain ATCC 700651 / DSM 11573 / NCIMB 13689 / SK2).